The primary structure comprises 84 residues: Beta-cardiotoxin CTX15 (84 aa).

The first 21 residues, methionine 1–threonine 21, serve as a signal peptide directing secretion. 4 disulfides stabilise this stretch: cysteine 24–cysteine 43, cysteine 36–cysteine 61, cysteine 65–cysteine 76, and cysteine 77–cysteine 82.

The protein belongs to the three-finger toxin family. Short-chain subfamily. Aminergic toxin sub-subfamily. In terms of tissue distribution, expressed by the venom gland.

It is found in the secreted. In terms of biological role, acts as a beta-blocker by binding to beta-1 and beta-2 adrenergic receptors (ADRB1 and ADRB2). It dose-dependently decreases the heart rate (bradycardia), whereas conventional cardiotoxins increases it. At 100 mg/kg, intraperitoneal injection into mice provokes labored breathing, impaired locomotion, lack of response to external stimuli, and death (after 30 minutes). This chain is Beta-cardiotoxin CTX15, found in Ophiophagus hannah (King cobra).